The following is a 368-amino-acid chain: Glycoprotein UL18 (368 aa).

Residues 1–18 (MMTMWCLTLFVLWMLRVV) form the signal peptide. Residues 19 to 114 (GMHVLRYGYT…EIALGYRSQS (96 aa)) form an alpha-1-like region. Asn56, Asn66, Asn74, Asn95, Asn123, Asn127, Asn150, Asn167, Asn177, Asn193, Asn240, Asn282, and Asn291 each carry an N-linked (GlcNAc...) asparagine; by host glycan. Residues 115–208 (VLTWTHECNT…VIYSGFQPPV (94 aa)) form an alpha-2-like region. Positions 209-303 (THPVVKGGVR…VEIPISVTSP (95 aa)) are alpha-3-like. Residues 321–342 (YNTMTISSVLLALLLCALLFAF) form a helical membrane-spanning segment.

As to quaternary structure, interacts with host LILRB1.

The protein resides in the host membrane. In terms of biological role, plays a role in the protection against host NK cell cytotoxicity by interacting with and modulating the activity of the host inhibitory leukocyte Ig-like receptor 1/LILRB1, which is expressed on monocytes, dendritic cells, as well as subsets of T and NK cells. UL18 exerts an inhibitory effect on LIR-1+ NK cells, while it stimulates LIR-1- NK cell. These modulations prevent lysis of the infected cells by NK cells. This Homo sapiens (Human) protein is Glycoprotein UL18 (H301).